A 228-amino-acid chain; its full sequence is Phosphoribosylformylglycinamidine synthase subunit PurQ (228 aa).

Residues Phe-3 to Thr-225 form the Glutamine amidotransferase type-1 domain. Cys-86 acts as the Nucleophile in catalysis. Active-site residues include His-194 and Glu-196.

Part of the FGAM synthase complex composed of 1 PurL, 1 PurQ and 2 PurS subunits.

It is found in the cytoplasm. It catalyses the reaction N(2)-formyl-N(1)-(5-phospho-beta-D-ribosyl)glycinamide + L-glutamine + ATP + H2O = 2-formamido-N(1)-(5-O-phospho-beta-D-ribosyl)acetamidine + L-glutamate + ADP + phosphate + H(+). It carries out the reaction L-glutamine + H2O = L-glutamate + NH4(+). It functions in the pathway purine metabolism; IMP biosynthesis via de novo pathway; 5-amino-1-(5-phospho-D-ribosyl)imidazole from N(2)-formyl-N(1)-(5-phospho-D-ribosyl)glycinamide: step 1/2. Functionally, part of the phosphoribosylformylglycinamidine synthase complex involved in the purines biosynthetic pathway. Catalyzes the ATP-dependent conversion of formylglycinamide ribonucleotide (FGAR) and glutamine to yield formylglycinamidine ribonucleotide (FGAM) and glutamate. The FGAM synthase complex is composed of three subunits. PurQ produces an ammonia molecule by converting glutamine to glutamate. PurL transfers the ammonia molecule to FGAR to form FGAM in an ATP-dependent manner. PurS interacts with PurQ and PurL and is thought to assist in the transfer of the ammonia molecule from PurQ to PurL. This is Phosphoribosylformylglycinamidine synthase subunit PurQ from Latilactobacillus sakei subsp. sakei (strain 23K) (Lactobacillus sakei subsp. sakei).